Here is a 53-residue protein sequence, read N- to C-terminus: U1-poneritoxin-Dq5a (53 aa).

Residues 1–23 (MNIRLMFTLIALLVLTVSFSGAN) form the signal peptide. Intrachain disulfides connect Cys-25–Cys-42, Cys-32–Cys-47, and Cys-41–Cys-52.

In terms of tissue distribution, expressed by the venom gland.

It localises to the secreted. May have neurotoxic activity. The protein is U1-poneritoxin-Dq5a of Dinoponera quadriceps (South American ant).